Consider the following 196-residue polypeptide: ATP-dependent Clp protease proteolytic subunit (196 aa).

Ser101 serves as the catalytic Nucleophile. The active site involves His126.

It belongs to the peptidase S14 family. Component of the chloroplastic Clp protease core complex.

It is found in the plastid. The protein localises to the chloroplast stroma. It catalyses the reaction Hydrolysis of proteins to small peptides in the presence of ATP and magnesium. alpha-casein is the usual test substrate. In the absence of ATP, only oligopeptides shorter than five residues are hydrolyzed (such as succinyl-Leu-Tyr-|-NHMec, and Leu-Tyr-Leu-|-Tyr-Trp, in which cleavage of the -Tyr-|-Leu- and -Tyr-|-Trp bonds also occurs).. In terms of biological role, cleaves peptides in various proteins in a process that requires ATP hydrolysis. Has a chymotrypsin-like activity. Plays a major role in the degradation of misfolded proteins. This chain is ATP-dependent Clp protease proteolytic subunit, found in Nasturtium officinale (Watercress).